A 123-amino-acid chain; its full sequence is Holo-[acyl-carrier-protein] synthase (123 aa).

Mg(2+) is bound by residues Asp8 and Glu56.

It belongs to the P-Pant transferase superfamily. AcpS family. The cofactor is Mg(2+).

It localises to the cytoplasm. It carries out the reaction apo-[ACP] + CoA = holo-[ACP] + adenosine 3',5'-bisphosphate + H(+). In terms of biological role, transfers the 4'-phosphopantetheine moiety from coenzyme A to a Ser of acyl-carrier-protein. The polypeptide is Holo-[acyl-carrier-protein] synthase (Clostridium botulinum (strain Alaska E43 / Type E3)).